The sequence spans 593 residues: Protein PSP2 (593 aa).

Residues 56–65 are compositionally biased toward basic and acidic residues; it reads AGEHQRDGHQ. Residues 56–101 form a disordered region; it reads AGEHQRDGHQQHPHGGHGPMNRSRFSNAGPFGGGSMGDFANHHHPL. 2 positions are modified to phosphoserine: S150 and S238. 2 disordered regions span residues 227 to 248 and 280 to 593; these read KPFI…KPVD and DSMA…DMPL. Composition is skewed to polar residues over residues 231 to 241 and 280 to 290; these read TKTQRSKSNPF and DSMATTATGSK. S340 is modified (phosphoserine). Basic and acidic residues predominate over residues 347–402; the sequence is SKPDKSDEFKGGDEQGFEKGGDDKAQLDVSNDKDKGSETDVDKQFTFKNVEREHSM. Residues 408-426 are compositionally biased toward low complexity; the sequence is NGNHNNNNGNFRGSNRYRG. R419, R425, and R440 each carry omega-N-methylarginine. At R443 the chain carries Dimethylated arginine. R447 is modified (omega-N-methylarginine). Over residues 449 to 477 the composition is skewed to low complexity; sequence GSSYNNNNNNTNDNNNNNNNSSSNNNNGS. Polar residues-rich tracts occupy residues 486–497 and 505–516; these read EEGLTSDSSLDA and FTNSTSNTQQYS. The residue at position 522 (S522) is a Phosphoserine. The segment covering 534 to 545 has biased composition (low complexity); that stretch reads RNNGRGNYNSSG. An omega-N-methylarginine mark is found at R538, R551, and R575. Residues 546–563 are compositionally biased toward gly residues; sequence MNGGSRGRGFGRGRGFGR. Positions 578–587 are enriched in low complexity; it reads SGNYSNYNNR.

The protein localises to the cytoplasm. Its subcellular location is the P-body. The protein resides in the stress granule. Functionally, DNA polymerase alpha mutation suppressor. Suppressor of group II intron splicing defects of a mutation in MRS2. May play a role in mitochondrial mRNA splicing. In Saccharomyces cerevisiae (strain ATCC 204508 / S288c) (Baker's yeast), this protein is Protein PSP2.